A 633-amino-acid polypeptide reads, in one-letter code: Chaperone protein DnaK (633 aa).

Threonine 198 bears the Phosphothreonine; by autocatalysis mark. The interval 599–633 (QQASQETPGDGDAGAAGAKKKDDDDVVDADYEEVK) is disordered. The span at 622–633 (DDVVDADYEEVK) shows a compositional bias: acidic residues.

The protein belongs to the heat shock protein 70 family.

In terms of biological role, acts as a chaperone. This is Chaperone protein DnaK from Desulfotalea psychrophila (strain LSv54 / DSM 12343).